A 288-amino-acid polypeptide reads, in one-letter code: Homoserine kinase (288 aa).

79–89 (PPARGLGSSSA) is an ATP binding site.

It belongs to the GHMP kinase family. Homoserine kinase subfamily.

Its subcellular location is the cytoplasm. It catalyses the reaction L-homoserine + ATP = O-phospho-L-homoserine + ADP + H(+). Its pathway is amino-acid biosynthesis; L-threonine biosynthesis; L-threonine from L-aspartate: step 4/5. Catalyzes the ATP-dependent phosphorylation of L-homoserine to L-homoserine phosphate. This is Homoserine kinase from Listeria monocytogenes serotype 4b (strain F2365).